Reading from the N-terminus, the 205-residue chain is Probable thymidylate kinase (205 aa).

7–14 contributes to the ATP binding site; that stretch reads GIDGSGKS.

This sequence belongs to the thymidylate kinase family.

The catalysed reaction is dTMP + ATP = dTDP + ADP. This is Probable thymidylate kinase from Methanoculleus marisnigri (strain ATCC 35101 / DSM 1498 / JR1).